Consider the following 1434-residue polypeptide: DNA-directed RNA polymerase subunit beta' (1434 aa).

Cys70, Cys72, Cys85, and Cys88 together coordinate Zn(2+). Mg(2+) is bound by residues Asp460, Asp462, and Asp464. Zn(2+)-binding residues include Cys840, Cys915, Cys922, and Cys925.

The protein belongs to the RNA polymerase beta' chain family. As to quaternary structure, the RNAP catalytic core consists of 2 alpha, 1 beta, 1 beta' and 1 omega subunit. When a sigma factor is associated with the core the holoenzyme is formed, which can initiate transcription. The cofactor is Mg(2+). Zn(2+) is required as a cofactor.

It carries out the reaction RNA(n) + a ribonucleoside 5'-triphosphate = RNA(n+1) + diphosphate. DNA-dependent RNA polymerase catalyzes the transcription of DNA into RNA using the four ribonucleoside triphosphates as substrates. The polypeptide is DNA-directed RNA polymerase subunit beta' (Aeromonas hydrophila subsp. hydrophila (strain ATCC 7966 / DSM 30187 / BCRC 13018 / CCUG 14551 / JCM 1027 / KCTC 2358 / NCIMB 9240 / NCTC 8049)).